The primary structure comprises 203 residues: Small ribosomal subunit protein uS7 (203 aa).

A disordered region spans residues 1–21 (MSSEAPEPDAPASTDDERVSA).

It belongs to the universal ribosomal protein uS7 family. Part of the 30S ribosomal subunit.

In terms of biological role, one of the primary rRNA binding proteins, it binds directly to 16S rRNA where it nucleates assembly of the head domain of the 30S subunit. Is located at the subunit interface close to the decoding center. The chain is Small ribosomal subunit protein uS7 from Natronomonas pharaonis (strain ATCC 35678 / DSM 2160 / CIP 103997 / JCM 8858 / NBRC 14720 / NCIMB 2260 / Gabara) (Halobacterium pharaonis).